Here is a 351-residue protein sequence, read N- to C-terminus: Inositol monophosphatase 3 (351 aa).

A helical membrane pass occupies residues 11-31 (LGIGVFCLLALGVLYHVYSGF). The Mg(2+) site is built by glutamate 121, aspartate 162, leucine 164, aspartate 165, and aspartate 288. Glutamate 121 lines the substrate pocket. Residues 164–167 (LDAT) and aspartate 288 each bind substrate.

Belongs to the inositol monophosphatase superfamily. Mg(2+) is required as a cofactor.

It localises to the membrane. It catalyses the reaction a myo-inositol phosphate + H2O = myo-inositol + phosphate. It functions in the pathway polyol metabolism; myo-inositol biosynthesis; myo-inositol from D-glucose 6-phosphate: step 2/2. The polypeptide is Inositol monophosphatase 3 (bpnt2) (Xenopus laevis (African clawed frog)).